A 235-amino-acid chain; its full sequence is Uracil-DNA glycosylase (235 aa).

Residue Asp71 is the Proton acceptor of the active site.

Belongs to the uracil-DNA glycosylase (UDG) superfamily. UNG family.

The protein resides in the cytoplasm. The enzyme catalyses Hydrolyzes single-stranded DNA or mismatched double-stranded DNA and polynucleotides, releasing free uracil.. Excises uracil residues from the DNA which can arise as a result of misincorporation of dUMP residues by DNA polymerase or due to deamination of cytosine. This Helicobacter hepaticus (strain ATCC 51449 / 3B1) protein is Uracil-DNA glycosylase.